A 237-amino-acid polypeptide reads, in one-letter code: Ribonuclease PH (237 aa).

Residues R86 and 124-126 (GTR) contribute to the phosphate site.

This sequence belongs to the RNase PH family. As to quaternary structure, homohexameric ring arranged as a trimer of dimers.

The catalysed reaction is tRNA(n+1) + phosphate = tRNA(n) + a ribonucleoside 5'-diphosphate. Its function is as follows. Phosphorolytic 3'-5' exoribonuclease that plays an important role in tRNA 3'-end maturation. Removes nucleotide residues following the 3'-CCA terminus of tRNAs; can also add nucleotides to the ends of RNA molecules by using nucleoside diphosphates as substrates, but this may not be physiologically important. Probably plays a role in initiation of 16S rRNA degradation (leading to ribosome degradation) during starvation. This is Ribonuclease PH from Rhodopseudomonas palustris (strain HaA2).